Consider the following 230-residue polypeptide: Ion-translocating oxidoreductase complex subunit E (230 aa).

The next 6 helical transmembrane spans lie at 18–38 (ALVQLLGMCPLLAVTSTATNA), 39–59 (LGLGLATTLVLTLTNLTISTL), 63–83 (TPTEIRIPIYVMIIASVVSAV), 86–106 (LINAYAFGLYQSLGIFIPLIV), 128–148 (ALDGFAIGMGATGAMFVLGAM), and 182–202 (PFLLAMLPPGAFIGLGLMLAG).

This sequence belongs to the NqrDE/RnfAE family. In terms of assembly, the complex is composed of six subunits: RsxA, RsxB, RsxC, RsxD, RsxE and RsxG.

The protein resides in the cell inner membrane. Functionally, part of a membrane-bound complex that couples electron transfer with translocation of ions across the membrane. Required to maintain the reduced state of SoxR. The polypeptide is Ion-translocating oxidoreductase complex subunit E (Escherichia fergusonii (strain ATCC 35469 / DSM 13698 / CCUG 18766 / IAM 14443 / JCM 21226 / LMG 7866 / NBRC 102419 / NCTC 12128 / CDC 0568-73)).